The chain runs to 274 residues: Large ribosomal subunit protein uL2 (274 aa).

Disordered stretches follow at residues 36–61 (QKSK…HKQR) and 223–274 (VAMN…RRKR). The segment covering 37–46 (KSKTGGRNSN) has biased composition (polar residues). Basic residues-rich tracts occupy residues 50-61 (TTRHRGGGHKQR) and 254-274 (KGHK…RRKR).

The protein belongs to the universal ribosomal protein uL2 family. As to quaternary structure, part of the 50S ribosomal subunit. Forms a bridge to the 30S subunit in the 70S ribosome.

Its function is as follows. One of the primary rRNA binding proteins. Required for association of the 30S and 50S subunits to form the 70S ribosome, for tRNA binding and peptide bond formation. It has been suggested to have peptidyltransferase activity; this is somewhat controversial. Makes several contacts with the 16S rRNA in the 70S ribosome. This Halorhodospira halophila (strain DSM 244 / SL1) (Ectothiorhodospira halophila (strain DSM 244 / SL1)) protein is Large ribosomal subunit protein uL2.